The chain runs to 141 residues: Nucleoside diphosphate kinase (141 aa).

ATP is bound by residues Lys11, Phe59, Arg87, Thr93, Arg104, and Asn114. His117 (pros-phosphohistidine intermediate) is an active-site residue.

The protein belongs to the NDK family. In terms of assembly, homotetramer. It depends on Mg(2+) as a cofactor.

The protein resides in the cytoplasm. It carries out the reaction a 2'-deoxyribonucleoside 5'-diphosphate + ATP = a 2'-deoxyribonucleoside 5'-triphosphate + ADP. The catalysed reaction is a ribonucleoside 5'-diphosphate + ATP = a ribonucleoside 5'-triphosphate + ADP. Functionally, major role in the synthesis of nucleoside triphosphates other than ATP. The ATP gamma phosphate is transferred to the NDP beta phosphate via a ping-pong mechanism, using a phosphorylated active-site intermediate. The sequence is that of Nucleoside diphosphate kinase from Xanthomonas axonopodis pv. citri (strain 306).